Reading from the N-terminus, the 444-residue chain is Acyl-CoA 6-desaturase (444 aa).

At 1–131 (MGKGGNQGEG…DMNLFKTNHV (131 aa)) the chain is on the cytoplasmic side. Residues 18–95 (VPTFSWEEIQ…LKPLLIGELA (78 aa)) enclose the Cytochrome b5 heme-binding domain. Residues 132–152 (FFLLLLAHIIALESIAWFTVF) traverse the membrane as a helical segment. The Lumenal segment spans residues 153–157 (YFGNG). Residues 158–178 (WISTLITAFVLATSQAQAGWL) form a helical membrane-spanning segment. Topologically, residues 179–264 (QHDYGHLSVY…KYLPYNHQHE (86 aa)) are cytoplasmic. Positions 180–184 (HDYGH) match the Histidine box-1 motif. The short motif at 217-221 (HFQHH) is the Histidine box-2 element. The chain crosses the membrane as a helical span at residues 265 to 285 (YFFLIGPPLLIPMYFQYQIIM). The Lumenal portion of the chain corresponds to 286 to 305 (TMIVHKNWVDLAWAISYYIR). A helical membrane pass occupies residues 306-326 (FFITYIPFYGILGALLFLNFI). Over 327-444 (RFLESHWFVW…KLWLDAYLHK (118 aa)) the chain is Cytoplasmic. A Histidine box-3 motif is present at residues 382 to 386 (QIEHH).

The protein belongs to the fatty acid desaturase type 1 family.

The protein resides in the endoplasmic reticulum membrane. The catalysed reaction is (9Z,12Z)-octadecadienoyl-CoA + 2 Fe(II)-[cytochrome b5] + O2 + 2 H(+) = (6Z,9Z,12Z)-octadecatrienoyl-CoA + 2 Fe(III)-[cytochrome b5] + 2 H2O. It carries out the reaction (9Z,12Z,15Z)-octadecatrienoyl-CoA + 2 Fe(II)-[cytochrome b5] + O2 + 2 H(+) = (6Z,9Z,12Z,15Z)-octadecatetraenoyl-CoA + 2 Fe(III)-[cytochrome b5] + 2 H2O. It catalyses the reaction (9Z,12Z,15Z,18Z,21Z)-tetracosapentaenoyl-CoA + 2 Fe(II)-[cytochrome b5] + O2 + 2 H(+) = (6Z,9Z,12Z,15Z,18Z,21Z)-tetracosahexaenoyl-CoA + 2 Fe(III)-[cytochrome b5] + 2 H2O. The enzyme catalyses (11E)-octadecenoyl-CoA + 2 Fe(II)-[cytochrome b5] + O2 + 2 H(+) = (6Z,11E)-octadecadienoyl-CoA + 2 Fe(III)-[cytochrome b5] + 2 H2O. The catalysed reaction is (11Z,14Z)-eicosadienoyl-CoA + 2 Fe(II)-[cytochrome b5] + O2 + 2 H(+) = (8Z,11Z,14Z)-eicosatrienoyl-CoA + 2 Fe(III)-[cytochrome b5] + 2 H2O. It carries out the reaction (11Z,14Z,17Z)-eicosatrienoyl-CoA + 2 Fe(II)-[cytochrome b5] + O2 + 2 H(+) = (8Z,11Z,14Z,17Z)-eicosatetraenoyl-CoA + 2 Fe(III)-[cytochrome b5] + 2 H2O. It functions in the pathway lipid metabolism; polyunsaturated fatty acid biosynthesis. Functionally, involved in the biosynthesis of highly unsaturated fatty acids (HUFA) from the essential polyunsaturated fatty acids (PUFA) linoleic acid (LA) (18:2n-6) and alpha-linolenic acid (ALA) (18:3n-3) precursors, acting as a fatty acyl-coenzyme A (CoA) desaturase that introduces a cis double bond at carbon 6 of the fatty acyl chain. Catalyzes the first and rate limiting step in this pathway which is the desaturation of LA (18:2n-6) and ALA (18:3n-3) into gamma-linoleate (GLA) (18:3n-6) and stearidonate (18:4n-3), respectively. Subsequently, in the biosynthetic pathway of HUFA n-3 series, it desaturates tetracosapentaenoate (24:5n-3) to tetracosahexaenoate (24:6n-3), which is then converted to docosahexaenoate (DHA)(22:6n-3), an important lipid for nervous system function. It can also desaturate (11E)-octadecenoate (trans-vaccenoate) at carbon 6 generating (6Z,11E)-octadecadienoate. In addition to Delta-6 activity, this enzyme exhibits Delta-8 activity with slight biases toward n-3 fatty acyl-CoA substrates. This is Acyl-CoA 6-desaturase (FADS2) from Pongo abelii (Sumatran orangutan).